The primary structure comprises 375 residues: Deoxyribonuclease-2 (375 aa).

A signal peptide spans 1–21 (MGLSPAAVLIFLLLGVSQTYA). Asn131 carries N-linked (GlcNAc...) asparagine glycosylation.

It belongs to the DNase II family.

The catalysed reaction is Endonucleolytic cleavage to nucleoside 3'-phosphates and 3'-phosphooligonucleotide end-products.. In terms of biological role, hydrolyzes DNA under acidic conditions with a preference for double-stranded DNA. Implicated in apoptosis. The polypeptide is Deoxyribonuclease-2 (nuc-1) (Caenorhabditis elegans).